The following is a 1137-amino-acid chain: Otoancorin (1137 aa).

The signal sequence occupies residues 1-23; it reads MSQGPRTCSLLLVLLLSHGGAYQ. N-linked (GlcNAc...) asparagine glycosylation is found at Asn-156, Asn-211, Asn-244, Asn-289, Asn-321, Asn-380, Asn-384, Asn-530, Asn-594, Asn-740, and Asn-798. A compositionally biased stretch (polar residues) spans 1095–1115; it reads HSWQTDPLSSSPTWPASTGSP. The disordered stretch occupies residues 1095-1119; the sequence is HSWQTDPLSSSPTWPASTGSPTGEP. Gly-1113 carries GPI-anchor amidated glycine lipidation. Positions 1114–1137 are cleaved as a propeptide — removed in mature form; that stretch reads SPTGEPASQALWLGCTLLLLTAKS.

It belongs to the stereocilin family. As to expression, expressed in the inner ear and vestibule.

The protein localises to the apical cell membrane. It is found in the secreted. The protein resides in the extracellular space. Its subcellular location is the extracellular matrix. Its function is as follows. May act as an adhesion molecule. The polypeptide is Otoancorin (Otoa) (Mus musculus (Mouse)).